The following is a 260-amino-acid chain: MPSIQLPVLLLCLTLSGVCLNGRQFPPELSENMGRSSLDDILQRSGSHMLQSVLKKVEKKEEMNKELNMPLPQWLSKRQHPGKRYISDPEKRQHPGKRDVEEKASFGDIQKRQHLGKTEVEGYLVNYLELKKRQHPGRRSLWDQSTDISSSQLTYLNELSKRQHPGRRYLMYKHQHPSKRGWNDELDLSDQNWEKHQQFGNRDRDSDSPDYTGPCDLQQSAICNKDSLLLDLAEKFSKEGVEEKHQHPGRRSAWENETEE.

An N-terminal signal peptide occupies residues 1-24; that stretch reads MPSIQLPVLLLCLTLSGVCLNGRQ. The segment at 72–112 is disordered; sequence PQWLSKRQHPGKRYISDPEKRQHPGKRDVEEKASFGDIQKR. At Gln79 the chain carries Pyrrolidone carboxylic acid. Pro81 is modified (proline amide). The span at 85–112 shows a compositional bias: basic and acidic residues; sequence YISDPEKRQHPGKRDVEEKASFGDIQKR. Gln93 is modified (pyrrolidone carboxylic acid). Position 95 is a proline amide (Pro95). Pyrrolidone carboxylic acid is present on Gln113. The residue at position 115 (Leu115) is a Leucine amide. Pyrrolidone carboxylic acid is present on Gln134. Pro136 bears the Proline amide mark. Gln163 is subject to Pyrrolidone carboxylic acid. Pro165 is modified (proline amide). Residues 195-207 show a composition bias toward basic and acidic residues; it reads KHQQFGNRDRDSD. Disordered stretches follow at residues 195-217 and 238-260; these read KHQQ…PCDL and KEGV…ETEE. Gln246 bears the Pyrrolidone carboxylic acid mark. Pro248 is modified (proline amide).

It belongs to the TRH family.

It is found in the secreted. Its function is as follows. Functions as a regulator of the biosynthesis of TSH in the anterior pituitary gland and as a neurotransmitter/ neuromodulator in the central and peripheral nervous systems. The protein is Pro-thyrotropin-releasing hormone (TRH) of Gallus gallus (Chicken).